A 553-amino-acid polypeptide reads, in one-letter code: Ergothioneine transport permease/ergothioneine binding protein EgtU (553 aa).

Positions 57–236 (LAQHFIIVAL…LFSVLADKFV (180 aa)) constitute an ABC transmembrane type-1 domain. The next 6 helical transmembrane spans lie at 61-81 (FIIV…IGVF), 98-118 (FLYT…IGVG), 122-142 (ALLV…YNAL), 182-202 (IAVV…AGGL), 219-239 (VAGS…VSVF), and 261-281 (VYTN…WLIP). At 282–553 (RNAIEEKPLV…AKDFLERLGL (272 aa)) the chain is on the periplasmic side. The ergothioneine binding domain stretch occupies residues 288–549 (KPLVVATKPS…PKIVAKDFLE (262 aa)).

In the N-terminal section; belongs to the binding-protein-dependent transport system permease family. It in the C-terminal section; belongs to the OsmX family. As to quaternary structure, the complex is composed of two ATP-binding proteins (EgtV) and two transmembrane proteins (EgtU).

Its subcellular location is the cell inner membrane. In terms of biological role, part of the ABC transporter complex EgtUV involved in the uptake of ergothioneine (EGT), a natural low-molecular weight (LMW) thiol antioxidant which protects H.pylori against bleach stress. Responsible for the translocation of the substrate across the membrane. Also contains a C-terminal periplasmic solute-binding domain (SBD) which binds to ergothioneine with low-micromolar affinity. Cannot bind the structurally similar compounds glycine betaine, choline, proline, carnitine or histidine. In Helicobacter pylori (strain G27), this protein is Ergothioneine transport permease/ergothioneine binding protein EgtU.